We begin with the raw amino-acid sequence, 432 residues long: MGKSVAILGAQWGDEGKGKIVDLLTDRVKYVVRYQGGHNAGHTLIINGEKTVLRLIPSGILRDNVTCLIGNGVVLSPEALMKEMGELEARGINVRDRLKISEACPLILPYHVAMDHAREAALGKNKIGTTGRGIGPAYEDKVARRGLRVSDLFDKEAFAEKLKDILDYYNFQLVHYYKVEPVDFQKTLDDVFAIADVIKGMVADVTTLLHQARKDGVNILFEGAQGTMLDIDHGTYPFVTSSNTTAGGVATGSGFGPRNLDYVLGIIKAYCTRVGSGPFTTELFDEVGAEIARKGNEFGAVTGRPRRCGWFDAVAVRRAVQINSISGFCMTKLDVLDGFEELKICTAYKMPNGEIVEYAPMAAKDWKGVEPIYETMPGWSENTFRVTKREELPQAALDYIKRIEELVGVPVDILSTGPDRVETMILRDPFAA.

GTP-binding positions include 13 to 19 (GDEGKGK) and 41 to 43 (GHT). Aspartate 14 acts as the Proton acceptor in catalysis. Residues aspartate 14 and glycine 41 each coordinate Mg(2+). IMP is bound by residues 14-17 (DEGK), 39-42 (NAGH), threonine 130, arginine 144, glutamine 225, threonine 240, and arginine 304. Catalysis depends on histidine 42, which acts as the Proton donor. A substrate-binding site is contributed by 300-306 (AVTGRPR). Residues arginine 306, 332–334 (KLD), and 415–417 (STG) each bind GTP.

It belongs to the adenylosuccinate synthetase family. As to quaternary structure, homodimer. Mg(2+) is required as a cofactor.

Its subcellular location is the cytoplasm. It carries out the reaction IMP + L-aspartate + GTP = N(6)-(1,2-dicarboxyethyl)-AMP + GDP + phosphate + 2 H(+). It functions in the pathway purine metabolism; AMP biosynthesis via de novo pathway; AMP from IMP: step 1/2. Its function is as follows. Plays an important role in the de novo pathway of purine nucleotide biosynthesis. Catalyzes the first committed step in the biosynthesis of AMP from IMP. This chain is Adenylosuccinate synthetase, found in Actinobacillus pleuropneumoniae serotype 7 (strain AP76).